The sequence spans 259 residues: Carbonic anhydrase 1 (259 aa).

The residue at position 1 (A1) is an N-acetylalanine. Positions 2 to 258 constitute an Alpha-carbonic anhydrase domain; the sequence is HAWGYGPTDG…LKGRHVRASF (257 aa). H63 serves as the catalytic Proton donor/acceptor. The Zn(2+) site is built by H93, H95, and H118. Substrate-binding positions include T197 and 197–198; that span reads TT.

Belongs to the alpha-carbonic anhydrase family. It depends on Zn(2+) as a cofactor.

It is found in the cytoplasm. The enzyme catalyses hydrogencarbonate + H(+) = CO2 + H2O. Functionally, catalyzes the reversible hydration of carbon dioxide. This Chionodraco hamatus (Antarctic teleost icefish) protein is Carbonic anhydrase 1 (ca1).